The chain runs to 451 residues: F-box/LRR-repeat protein 13 (451 aa).

Residues 17–70 (VDWISKLPDCLLCEVLLNLPTKDVVKTSVLSRRWRNLWKHVPGLDLDNTDFQEF) form the F-box domain. LRR repeat units follow at residues 128–155 (DDSYGSWEVQLPSSIYTCESLVSLKLCG), 177–202 (TKFADDMGLETLITKCPVLESLTIER), 224–251 (VADSDEGVVEDLVVSIDAPKLEYLRLSD), and 335–363 (CVEFYGYMWEMLPIFLESCPNLKTLVVKS). The FBD domain maps to 370-421 (GENIILPGPRRFLSSLEYVKIERPLKGEAMEMKLVSYLLENSTILKKLTLCL).

The polypeptide is F-box/LRR-repeat protein 13 (FBL13) (Arabidopsis thaliana (Mouse-ear cress)).